The following is a 299-amino-acid chain: Oxygen-dependent coproporphyrinogen-III oxidase (299 aa).

Ser92 contacts substrate. A divalent metal cation contacts are provided by His96 and His106. His106 functions as the Proton donor in the catalytic mechanism. 108-110 contacts substrate; the sequence is NVR. A divalent metal cation is bound by residues His145 and His175. The segment at 240–275 is important for dimerization; sequence YVEFNLVWDRGTLFGLQTGGRTESILMSMPPLVRWE. Residue 258–260 coordinates substrate; it reads GGR.

It belongs to the aerobic coproporphyrinogen-III oxidase family. Homodimer. It depends on a divalent metal cation as a cofactor.

Its subcellular location is the cytoplasm. It carries out the reaction coproporphyrinogen III + O2 + 2 H(+) = protoporphyrinogen IX + 2 CO2 + 2 H2O. The protein operates within porphyrin-containing compound metabolism; protoporphyrin-IX biosynthesis; protoporphyrinogen-IX from coproporphyrinogen-III (O2 route): step 1/1. Functionally, involved in the heme biosynthesis. Catalyzes the aerobic oxidative decarboxylation of propionate groups of rings A and B of coproporphyrinogen-III to yield the vinyl groups in protoporphyrinogen-IX. This is Oxygen-dependent coproporphyrinogen-III oxidase from Salmonella paratyphi B (strain ATCC BAA-1250 / SPB7).